An 81-amino-acid chain; its full sequence is Sulfur carrier protein TusA (81 aa).

Cys-19 serves as the catalytic Cysteine persulfide intermediate.

This sequence belongs to the sulfur carrier protein TusA family. Interacts with IscS.

It is found in the cytoplasm. Its pathway is tRNA modification. Functionally, sulfur carrier protein involved in sulfur trafficking in the cell. Part of a sulfur-relay system required for 2-thiolation during synthesis of 2-thiouridine of the modified wobble base 5-methylaminomethyl-2-thiouridine (mnm(5)s(2)U) in tRNA. Interacts with IscS and stimulates its cysteine desulfurase activity. Accepts an activated sulfur from IscS, which is then transferred to TusD, and thus determines the direction of sulfur flow from IscS to 2-thiouridine formation. Also appears to be involved in sulfur transfer for the biosynthesis of molybdopterin. In Serratia proteamaculans (strain 568), this protein is Sulfur carrier protein TusA.